The primary structure comprises 443 residues: Glutamate--tRNA ligase 1 (443 aa).

A 'HIGH' region motif is present at residues 8 to 18; it reads PSPTGRLHVGN. The short motif at 239–243 is the 'KMSKS' region element; it reads KLSKR. Lysine 242 lines the ATP pocket.

This sequence belongs to the class-I aminoacyl-tRNA synthetase family. Glutamate--tRNA ligase type 1 subfamily. Monomer.

The protein resides in the cytoplasm. It carries out the reaction tRNA(Glu) + L-glutamate + ATP = L-glutamyl-tRNA(Glu) + AMP + diphosphate. Catalyzes the attachment of glutamate to tRNA(Glu) in a two-step reaction: glutamate is first activated by ATP to form Glu-AMP and then transferred to the acceptor end of tRNA(Glu). This Rhizorhabdus wittichii (strain DSM 6014 / CCUG 31198 / JCM 15750 / NBRC 105917 / EY 4224 / RW1) (Sphingomonas wittichii) protein is Glutamate--tRNA ligase 1.